Consider the following 640-residue polypeptide: Threonine--tRNA ligase (640 aa).

The 61-residue stretch at 1–61 (MPIITLPNGD…TEDSTLQIIT (61 aa)) folds into the TGS domain. The tract at residues 242-533 (DHRKIGKALD…LIEHYAGFMP (292 aa)) is catalytic. Zn(2+) is bound by residues Cys-333, His-384, and His-510.

This sequence belongs to the class-II aminoacyl-tRNA synthetase family. As to quaternary structure, homodimer. It depends on Zn(2+) as a cofactor.

It is found in the cytoplasm. The enzyme catalyses tRNA(Thr) + L-threonine + ATP = L-threonyl-tRNA(Thr) + AMP + diphosphate + H(+). In terms of biological role, catalyzes the attachment of threonine to tRNA(Thr) in a two-step reaction: L-threonine is first activated by ATP to form Thr-AMP and then transferred to the acceptor end of tRNA(Thr). Also edits incorrectly charged L-seryl-tRNA(Thr). In Acinetobacter baumannii (strain AB307-0294), this protein is Threonine--tRNA ligase.